Reading from the N-terminus, the 361-residue chain is Chorismate synthase (361 aa).

2 residues coordinate NADP(+): Arg-48 and Arg-54. FMN-binding positions include 125–127 (RSS), 238–239 (NA), Gly-278, 293–297 (KPTSS), and Arg-319.

It belongs to the chorismate synthase family. Homotetramer. FMNH2 is required as a cofactor.

It catalyses the reaction 5-O-(1-carboxyvinyl)-3-phosphoshikimate = chorismate + phosphate. Its pathway is metabolic intermediate biosynthesis; chorismate biosynthesis; chorismate from D-erythrose 4-phosphate and phosphoenolpyruvate: step 7/7. Functionally, catalyzes the anti-1,4-elimination of the C-3 phosphate and the C-6 proR hydrogen from 5-enolpyruvylshikimate-3-phosphate (EPSP) to yield chorismate, which is the branch point compound that serves as the starting substrate for the three terminal pathways of aromatic amino acid biosynthesis. This reaction introduces a second double bond into the aromatic ring system. The sequence is that of Chorismate synthase from Vibrio parahaemolyticus serotype O3:K6 (strain RIMD 2210633).